The primary structure comprises 360 residues: UDP-N-acetylglucosamine--N-acetylmuramyl-(pentapeptide) pyrophosphoryl-undecaprenol N-acetylglucosamine transferase (360 aa).

Residues 11–13 (TGG), asparagine 120, arginine 161, serine 188, and glutamine 282 contribute to the UDP-N-acetyl-alpha-D-glucosamine site.

This sequence belongs to the glycosyltransferase 28 family. MurG subfamily.

It is found in the cell inner membrane. It carries out the reaction di-trans,octa-cis-undecaprenyl diphospho-N-acetyl-alpha-D-muramoyl-L-alanyl-D-glutamyl-meso-2,6-diaminopimeloyl-D-alanyl-D-alanine + UDP-N-acetyl-alpha-D-glucosamine = di-trans,octa-cis-undecaprenyl diphospho-[N-acetyl-alpha-D-glucosaminyl-(1-&gt;4)]-N-acetyl-alpha-D-muramoyl-L-alanyl-D-glutamyl-meso-2,6-diaminopimeloyl-D-alanyl-D-alanine + UDP + H(+). Its pathway is cell wall biogenesis; peptidoglycan biosynthesis. Functionally, cell wall formation. Catalyzes the transfer of a GlcNAc subunit on undecaprenyl-pyrophosphoryl-MurNAc-pentapeptide (lipid intermediate I) to form undecaprenyl-pyrophosphoryl-MurNAc-(pentapeptide)GlcNAc (lipid intermediate II). In Synechococcus sp. (strain RCC307), this protein is UDP-N-acetylglucosamine--N-acetylmuramyl-(pentapeptide) pyrophosphoryl-undecaprenol N-acetylglucosamine transferase.